Here is a 270-residue protein sequence, read N- to C-terminus: Thiosulfate dehydrogenase (270 aa).

Positions 1–27 (MRGDVRVHTASPIAAAWLLAVGLVAHA) are cleaved as a signal peptide. 2 consecutive Cytochrome c domains span residues 44-158 (PDGA…PVGA) and 174-260 (PDGV…LTHP). Cys-76, Cys-79, His-80, Cys-187, Cys-190, and His-191 together coordinate heme c.

Monomer. Binds 2 heme c groups covalently per subunit.

The protein localises to the periplasm. It catalyses the reaction 2 thiosulfate + 2 Fe(III)-[cytochrome c] = tetrathionate + 2 Fe(II)-[cytochrome c] + 2 H(+). Functionally, catalyzes the oxidation of 2 molecules of thiosulfate to tetrathionate. This chain is Thiosulfate dehydrogenase (tsdA), found in Allochromatium vinosum (strain ATCC 17899 / DSM 180 / NBRC 103801 / NCIMB 10441 / D) (Chromatium vinosum).